A 135-amino-acid polypeptide reads, in one-letter code: Large ribosomal subunit protein bL17 (135 aa).

Belongs to the bacterial ribosomal protein bL17 family. As to quaternary structure, part of the 50S ribosomal subunit. Contacts protein L32.

The protein is Large ribosomal subunit protein bL17 of Rhodopseudomonas palustris (strain BisB18).